We begin with the raw amino-acid sequence, 344 residues long: Sorting nexin-16 (344 aa).

Residues 1-10 show a composition bias toward pro residues; the sequence is MATPYVPVPM. The disordered stretch occupies residues 1 to 72; sequence MATPYVPVPM…SASSMCGSPL (72 aa). Residues 14–26 are compositionally biased toward polar residues; sequence NSASSFTNNRNQR. Positions 27 to 40 are enriched in low complexity; the sequence is SSSFGSVSTSSTSS. Residues 52–68 show a composition bias toward polar residues; that stretch reads LKQTNVQDQMDSASSMC. One can recognise a PX domain in the interval 105–218; it reads DRPSTPTILG…EFLCLDDPPG (114 aa). A 1,2-diacyl-sn-glycero-3-phospho-(1D-myo-inositol-3-phosphate)-binding residues include Arg144, Thr146, and Arg184. Ser222 is modified (phosphoserine). A coiled-coil region spans residues 223–278; sequence LEESRAFCETLEETNYHLQRELLEKQKEVESLKKLLGEKQLHIDALETRIRTLSLE.

It belongs to the sorting nexin family. Homooligomer. Interacts with EGFR.

It localises to the early endosome membrane. It is found in the late endosome membrane. The protein resides in the cytoplasm. The protein localises to the lysosome. Its function is as follows. May be involved in several stages of intracellular trafficking. Plays a role in protein transport from early to late endosomes. Plays a role in protein transport to the lysosome. Promotes degradation of EGFR after EGF signaling. The protein is Sorting nexin-16 (Snx16) of Mus musculus (Mouse).